A 169-amino-acid chain; its full sequence is Protein pid-1 (169 aa).

Positions 137 to 151 (SGSPRITPQKHTPVS) are enriched in polar residues. The disordered stretch occupies residues 137–169 (SGSPRITPQKHTPVSANHKPARSIFDDIPSNIA).

As to quaternary structure, component of the pid-1 variant of the PETISCO complex (also called the pid-3, erh-2, tofu-6, and ife-3 small RNA complex) containing at least pid-1, tofu-6, ife-3, pid-3, and erh-2, which is required for the biogenesis of a class of 21 nucleotide PIWI-interacting RNAs (piRNAs) that possess a uracil residue at the 5'-end (also called 21U-RNAs). Within the complex interacts with pid-3; the interaction is direct. Within the complex interacts with erh-2. Within the complex interacts with tofu-6. In terms of tissue distribution, expressed predominantly in the germline (at protein level).

It is found in the cytoplasm. The protein resides in the nucleus. The protein localises to the perinuclear region. Functionally, component of the pid-1 variant of the PETISCO complex which is required for the biogenesis of a class of 21 nucleotide PIWI-interacting RNAs (piRNAs) that possess a uracil residue at the 5'-end (also called 21U-RNAs). Within the complex acts as an adapter which binds to the complex via erh-2. Involved in the biogenesis of 21U-RNAs which guide the piwi protein prg-1 to its DNA targets for silencing. Plays a role in small RNA-directed transgenerational epigenetic inheritance. The sequence is that of Protein pid-1 from Caenorhabditis elegans.